The primary structure comprises 179 residues: Large ribosomal subunit protein uL5 (179 aa).

Belongs to the universal ribosomal protein uL5 family. Part of the 50S ribosomal subunit; part of the 5S rRNA/L5/L18/L25 subcomplex. Contacts the 5S rRNA and the P site tRNA. Forms a bridge to the 30S subunit in the 70S ribosome.

This is one of the proteins that bind and probably mediate the attachment of the 5S RNA into the large ribosomal subunit, where it forms part of the central protuberance. In the 70S ribosome it contacts protein S13 of the 30S subunit (bridge B1b), connecting the 2 subunits; this bridge is implicated in subunit movement. Contacts the P site tRNA; the 5S rRNA and some of its associated proteins might help stabilize positioning of ribosome-bound tRNAs. The polypeptide is Large ribosomal subunit protein uL5 (Bacillus anthracis (strain A0248)).